The sequence spans 456 residues: Histidine--tRNA ligase (456 aa).

Belongs to the class-II aminoacyl-tRNA synthetase family. As to quaternary structure, homodimer.

The protein localises to the cytoplasm. It catalyses the reaction tRNA(His) + L-histidine + ATP = L-histidyl-tRNA(His) + AMP + diphosphate + H(+). This Christiangramia forsetii (strain DSM 17595 / CGMCC 1.15422 / KT0803) (Gramella forsetii) protein is Histidine--tRNA ligase.